The primary structure comprises 298 residues: Riboflavin transporter (298 aa).

Transmembrane regions (helical) follow at residues 8 to 28, 35 to 55, 79 to 99, 101 to 121, 125 to 145, 151 to 171, 184 to 204, 211 to 231, and 258 to 278; these read LQGA…NSVA, FGLP…VVIL, VFLA…PVPI, QGIA…GLWL, VGMA…IILE, FNLA…YSLM, MVVY…LPDW, TVWL…WAIA, and WLVF…IIVL. EamA domains are found at residues 10 to 144 and 156 to 284; these read GALW…MIIL and LLPV…AFIT.

The protein belongs to the drug/metabolite transporter (DMT) superfamily. 10 TMS drug/metabolite exporter (DME) (TC 2.A.7.3) family.

It localises to the cell membrane. Its function is as follows. Transports riboflavin into the cell. The sequence is that of Riboflavin transporter from Vibrio cholerae serotype O1 (strain ATCC 39315 / El Tor Inaba N16961).